Reading from the N-terminus, the 443-residue chain is C4-dicarboxylate transport protein (443 aa).

Helical transmembrane passes span 10–30 (SLYFQVIVAIAIGILLGHFYP), 46–66 (LIKMVIAPIIFCTVVSGIAGM), 78–98 (YALLYFEIVSTIALLIGLIVV), 130–150 (SIVGFILNIIPATIVGAFANG), 152–172 (ILQVLMFSVVFGFALHRLGAY), 199–219 (PLGALGAMAFTIGAYGVGSLV), 224–244 (LMICFYITCVVFVLVVLGAIC), 291–311 (VVGLVIPTGYSFNLDGTSIYL), 332–352 (ITLLLVLLLSSKGAAGVTGSG), and 354–374 (IVLAATLSAVGHLPVAGLALI). The disordered stretch occupies residues 415 to 443 (ELASGGRPITDTRETDDLGVAEGPAPSIK).

Belongs to the dicarboxylate/amino acid:cation symporter (DAACS) (TC 2.A.23) family.

Its subcellular location is the cell inner membrane. Its function is as follows. Responsible for the transport of dicarboxylates such as succinate, fumarate, and malate from the periplasm across the membrane. The sequence is that of C4-dicarboxylate transport protein from Pseudomonas fluorescens (strain ATCC BAA-477 / NRRL B-23932 / Pf-5).